Here is a 487-residue protein sequence, read N- to C-terminus: Acetyl-coenzyme A carboxylase carboxyl transferase subunit beta, chloroplastic (487 aa).

In terms of domain architecture, CoA carboxyltransferase N-terminal spans 223 to 487 (LWVQCENCYG…LHAFFPLNQN (265 aa)). Zn(2+) is bound by residues Cys227, Cys230, Cys246, and Cys249. The C4-type zinc finger occupies 227–249 (CENCYGLNYKKSFKSKMNLCEQC).

Belongs to the AccD/PCCB family. In terms of assembly, acetyl-CoA carboxylase is a heterohexamer composed of biotin carboxyl carrier protein, biotin carboxylase and 2 subunits each of ACCase subunit alpha and ACCase plastid-coded subunit beta (accD). Zn(2+) serves as cofactor.

It is found in the plastid. It localises to the chloroplast stroma. It carries out the reaction N(6)-carboxybiotinyl-L-lysyl-[protein] + acetyl-CoA = N(6)-biotinyl-L-lysyl-[protein] + malonyl-CoA. The protein operates within lipid metabolism; malonyl-CoA biosynthesis; malonyl-CoA from acetyl-CoA: step 1/1. Its function is as follows. Component of the acetyl coenzyme A carboxylase (ACC) complex. Biotin carboxylase (BC) catalyzes the carboxylation of biotin on its carrier protein (BCCP) and then the CO(2) group is transferred by the transcarboxylase to acetyl-CoA to form malonyl-CoA. The chain is Acetyl-coenzyme A carboxylase carboxyl transferase subunit beta, chloroplastic from Panax ginseng (Korean ginseng).